The primary structure comprises 768 residues: Cullin-3 (768 aa).

Ser-2 is subject to N-acetylserine. Positions Ser-2–Ile-41 are interaction with KLHL18. Ser-585 is modified (phosphoserine). The tract at residues Val-677–Asp-698 is disordered. The span at Gly-682 to Asp-698 shows a compositional bias: basic and acidic residues. The Cullin neddylation domain occupies Asp-698–Asp-760. Lys-712 is covalently cross-linked (Glycyl lysine isopeptide (Lys-Gly) (interchain with G-Cter in NEDD8)).

The protein belongs to the cullin family. As to quaternary structure, forms neddylation-dependent homodimers. Component of multiple BCR (BTB-CUL3-RBX1) E3 ubiquitin-protein ligase complexes formed of CUL3, RBX1 and a variable BTB domain-containing protein acting as both, adapter to cullin and substrate recognition subunit. The BCR complex may be active as a heterodimeric complex, in which NEDD8, covalently attached to one CUL3 molecule, binds to the C-terminus of a second CUL3 molecule. Interacts with RBX1, RNF7, CYCE and TIP120A/CAND1. Part of the BCR(SPOP) containing SPOP, and of BCR containing homodimeric SPOPL or the heterodimer formed by SPOP and SPOPL. Part of the probable BCR(KLHL9-KLHL13) complex with BTB domain proteins KLHL9 and KLHL13. Part of the BCR(KLHL41) complex containing KLHL41. Component of the BCR(KLHL12) E3 ubiquitin ligase complex, at least composed of CUL3 and KLHL12 and RBX1. Component of the BCR(KLHL3) E3 ubiquitin ligase complex, at least composed of CUL3 and KLHL3 and RBX1. Part of the BCR(ENC1) complex containing ENC1. Part of a complex consisting of BMI1/PCGF4, CUL3 and SPOP. Part of a complex consisting of BRMS1, CUL3 and SPOP. Component of the BCR(KLHL21) E3 ubiquitin ligase complex, at least composed of CUL3, KLHL21 and RBX1. Component of the BCR(KLHL22) E3 ubiquitin ligase complex, at least composed of CUL3, KLHL22 and RBX1. Component of the BCR(KLHL25) E3 ubiquitin ligase complex, at least composed of CUL3, KLHL25 and RBX1. Part of a complex consisting of MACROH2A1, CUL3 and SPOP. Component of the BCR(KLHL42) E3 ubiquitin ligase complex, at least composed of CUL3 and KLHL42. Interacts with KLHL42 (via the BTB domain). Interacts with KATNA1; the interaction is enhanced by KLHL42. Component of the BCR(KBTBD8) E3 ubiquitin ligase complex, at least composed of CUL3, KBTBD8 and RBX1. Interacts with KCTD5, KLHL9, KLHL11, KLHL13, GAN, ZBTB16, KLHL3, KLHL15, KLHL20, KLHL36, GMCL2, BTBD1. Part of a complex that contains CUL3, RBX1 and GAN. Interacts (via BTB domain) with KLHL17; the interaction regulates surface GRIK2 expression. Interacts with KCTD7. Part of the BCR(GAN) complex containing GAN. Part of the BCR(KEAP1) complex containing KEAP1. Interacts with KLHL10. Interacts with KAT5 and ATF2. Interacts with KCTD17 in the BCR(KCTD17) E3 ubiquitin ligase complex, at least composed of CUL3, KCTD17 and RBX1. Interacts (when neddylated) with ARIH1; leading to activate the E3 ligase activity of ARIH1. Interacts with COPS9 isoform 2. Interacts with PPP2R5B; this interaction is indirect and mediated through KLHL15-binding and leads to PPP2R5B proteasomal degradation. Interacts with RBBP8/CtIP; this interaction is indirect and mediated through KLHL15-binding and leads to RBBP8 proteasomal degradation. Interacts with KLHL24 in the BCR(KLHL24) E3 ubiquitin ligase complex, composed of CUL3, RBX1 and KLHL24. Interacts with RHOBTB2. Interacts with AURKA and KLHL18 (via BTB domain). Interacts (unneddylated form) with DCUN1D1, DCUN1D2, DCUN1D3, DCUN1D4 and DCUN1D5; these interactions promote the cullin neddylation. Component of a BCR3 (BTB-CUL3-RBX1) E3 ubiquitin ligase complex, also named Cul3-RING ubiquitin ligase complex CUL3(KBTBD6/7), composed of CUL3, RBX1, KBTBD6 and KBTBD7. Component of the BCR(KBTBD2) E3 ubiquitin ligase complex, at least composed of CUL3, KBTBD2 and RBX1. Interacts with KBTBD2 (via the BTB domain). Component of the BCR(KBTBD4) E3 ubiquitin ligase complex, at least composed of CUL3, KBTBD4 and RBX1. Component of the BCR(ARMC5) E3 ubiquitin ligase complex, composed of CUL3, ARMC5 and RBX1. In terms of processing, neddylated. Attachment of NEDD8 is required for the E3 ubiquitin-protein ligase activity of the BCR complex. Deneddylated via its interaction with the COP9 signalosome (CSN) complex. As to expression, brain, spermatozoa, and testis (at protein level). Widely expressed.

Its subcellular location is the nucleus. The protein resides in the golgi apparatus. It is found in the cell projection. It localises to the cilium. The protein localises to the flagellum. Its subcellular location is the cytoplasm. The protein resides in the cytoskeleton. It is found in the spindle. It localises to the microtubule organizing center. The protein localises to the centrosome. Its subcellular location is the spindle pole. It participates in protein modification; protein ubiquitination. In terms of biological role, core component of multiple cullin-RING-based BCR (BTB-CUL3-RBX1) E3 ubiquitin-protein ligase complexes which mediate the ubiquitination and subsequent proteasomal degradation of target proteins. BCR complexes and ARIH1 collaborate in tandem to mediate ubiquitination of target proteins. As a scaffold protein may contribute to catalysis through positioning of the substrate and the ubiquitin-conjugating enzyme. The E3 ubiquitin-protein ligase activity of the complex is dependent on the neddylation of the cullin subunit and is inhibited by the association of the deneddylated cullin subunit with TIP120A/CAND1. The functional specificity of the BCR complex depends on the BTB domain-containing protein as the substrate recognition component. BCR(KLHL42) is involved in ubiquitination of KATNA1. BCR(SPOP) is involved in ubiquitination of BMI1/PCGF4, BRMS1, MACROH2A1 and DAXX, GLI2 and GLI3. Can also form a cullin-RING-based BCR (BTB-CUL3-RBX1) E3 ubiquitin-protein ligase complex containing homodimeric SPOPL or the heterodimer formed by SPOP and SPOPL; these complexes have lower ubiquitin ligase activity. BCR(KLHL9-KLHL13) controls the dynamic behavior of AURKB on mitotic chromosomes and thereby coordinates faithful mitotic progression and completion of cytokinesis. BCR(KLHL12) is involved in ER-Golgi transport by regulating the size of COPII coats, thereby playing a key role in collagen export, which is required for embryonic stem (ES) cells division: BCR(KLHL12) acts by mediating monoubiquitination of SEC31 (SEC31A or SEC31B). BCR(KLHL3) acts as a regulator of ion transport in the distal nephron; by mediating ubiquitination of WNK4. The BCR(KLHL20) E3 ubiquitin ligase complex is involved in interferon response and anterograde Golgi to endosome transport: it mediates both ubiquitination leading to degradation and 'Lys-33'-linked ubiquitination. The BCR(KLHL21) E3 ubiquitin ligase complex regulates localization of the chromosomal passenger complex (CPC) from chromosomes to the spindle midzone in anaphase and mediates the ubiquitination of AURKB. The BCR(KLHL22) ubiquitin ligase complex mediates monoubiquitination of PLK1, leading to PLK1 dissociation from phosphoreceptor proteins and subsequent removal from kinetochores, allowing silencing of the spindle assembly checkpoint (SAC) and chromosome segregation. The BCR(KLHL22) ubiquitin ligase complex is also responsible for the amino acid-stimulated 'Lys-48' polyubiquitination and proteasomal degradation of DEPDC5. Through the degradation of DEPDC5, releases the GATOR1 complex-mediated inhibition of the TORC1 pathway. The BCR(KLHL25) ubiquitin ligase complex is involved in translational homeostasis by mediating ubiquitination and subsequent degradation of hypophosphorylated EIF4EBP1 (4E-BP1). The BCR(KLHL25) ubiquitin ligase complex is also involved in lipid synthesis by mediating ubiquitination and degradation of ACLY. The BCR(KBTBD8) complex acts by mediating monoubiquitination of NOLC1 and TCOF1, leading to remodel the translational program of differentiating cells in favor of neural crest specification. Involved in ubiquitination of cyclin E and of cyclin D1 (in vitro) thus involved in regulation of G1/S transition. Involved in the ubiquitination of KEAP1, ENC1 and KLHL41. In concert with ATF2 and RBX1, promotes degradation of KAT5 thereby attenuating its ability to acetylate and activate ATM. The BCR(KCTD17) E3 ubiquitin ligase complex mediates ubiquitination and degradation of TCHP, a down-regulator of cilium assembly, thereby inducing ciliogenesis. The BCR(KLHL24) E3 ubiquitin ligase complex mediates ubiquitination of KRT14, controls KRT14 levels during keratinocytes differentiation, and is essential for skin integrity. The BCR(KLHL18) E3 ubiquitin ligase complex mediates the ubiquitination of AURKA leading to its activation at the centrosome which is required for initiating mitotic entry. The BCR(KEAP1) E3 ubiquitin ligase complex acts as a key sensor of oxidative and electrophilic stress by mediating ubiquitination and degradation of NFE2L2/NRF2, a transcription factor regulating expression of many cytoprotective genes. As part of the CUL3(KBTBD6/7) E3 ubiquitin ligase complex functions mediates 'Lys-48' ubiquitination and proteasomal degradation of TIAM1. By controlling the ubiquitination of that RAC1 guanine exchange factors (GEF), regulates RAC1 signal transduction and downstream biological processes including the organization of the cytoskeleton, cell migration and cell proliferation. The BCR(KBTBD4) E3 ubiquitin ligase complex targets CoREST corepressor complex components RCOR1, KDM1A/LSD1 and HDAC2 for proteasomal degradation with RCOR1 likely to be the primary target while degradation of KDM1A and HDAC2 is likely due to their association with RCOR1. It also targets RCOR3, MIER2 and MIER3 for proteasomal degradation as well as associated proteins ZNF217 and RREB1 with degradation being dependent on the presence of an ELM2 domain in the target proteins. The BCR(ARMC5) complex mediates premature transcription termination of transcripts that are unfavorably configured for transcriptional elongation by mediating ubiquitination of Pol II subunit POLR2A. Required for 'Lys-63'-linked ubiquitination of large ribosomal subunit protein MRPL12. This chain is Cullin-3, found in Homo sapiens (Human).